The following is a 122-amino-acid chain: uncharacterized protein (122 aa).

A compositionally biased stretch (polar residues) spans 1–10 (MGTGLRSQSL). Residues 1–68 (MGTGLRSQSL…GQEWLPGSLG (68 aa)) are disordered. Positions 40–56 (QGREKSRSSDGGPERLD) are enriched in basic and acidic residues.

This is an uncharacterized protein from Bos taurus (Bovine).